Reading from the N-terminus, the 366-residue chain is ATP-dependent 6-phosphofructokinase (366 aa).

ATP contacts are provided by residues Gly16, Arg78–Glu79, and Gly118–Thr121. Residues Leu74–Gly94 form a disordered region. Basic and acidic residues predominate over residues Ser77–Gly94. Asn119 serves as a coordination point for Mg(2+). Substrate is bound by residues Thr141–Asp143, Arg178, Met185–His187, Glu238, Arg282, and Tyr288–Arg291. Asp143 functions as the Proton acceptor in the catalytic mechanism.

The protein belongs to the phosphofructokinase type A (PFKA) family. Mixed-substrate PFK group III subfamily. As to quaternary structure, homodimer or homotetramer. Mg(2+) serves as cofactor.

Its subcellular location is the cytoplasm. It carries out the reaction beta-D-fructose 6-phosphate + ATP = beta-D-fructose 1,6-bisphosphate + ADP + H(+). The protein operates within carbohydrate degradation; glycolysis; D-glyceraldehyde 3-phosphate and glycerone phosphate from D-glucose: step 3/4. Its function is as follows. Catalyzes the phosphorylation of D-fructose 6-phosphate to fructose 1,6-bisphosphate by ATP, the first committing step of glycolysis. The polypeptide is ATP-dependent 6-phosphofructokinase (Spirochaeta thermophila (strain ATCC 49972 / DSM 6192 / RI 19.B1)).